Consider the following 617-residue polypeptide: Proline--tRNA ligase (617 aa).

It belongs to the class-II aminoacyl-tRNA synthetase family. ProS type 1 subfamily. Homodimer.

The protein resides in the cytoplasm. The catalysed reaction is tRNA(Pro) + L-proline + ATP = L-prolyl-tRNA(Pro) + AMP + diphosphate. Catalyzes the attachment of proline to tRNA(Pro) in a two-step reaction: proline is first activated by ATP to form Pro-AMP and then transferred to the acceptor end of tRNA(Pro). As ProRS can inadvertently accommodate and process non-cognate amino acids such as alanine and cysteine, to avoid such errors it has two additional distinct editing activities against alanine. One activity is designated as 'pretransfer' editing and involves the tRNA(Pro)-independent hydrolysis of activated Ala-AMP. The other activity is designated 'posttransfer' editing and involves deacylation of mischarged Ala-tRNA(Pro). The misacylated Cys-tRNA(Pro) is not edited by ProRS. This Streptococcus pneumoniae (strain CGSP14) protein is Proline--tRNA ligase.